The following is a 678-amino-acid chain: Methionine--tRNA ligase (678 aa).

Residues 14–24 (PYANGSIHLGH) carry the 'HIGH' region motif. Cys145, Cys148, Cys158, and Cys161 together coordinate Zn(2+). The short motif at 331 to 335 (KMSKS) is the 'KMSKS' region element. Residue Lys334 coordinates ATP. The tRNA-binding domain maps to 576-678 (AFAAVDLRIA…SGAKPGQRVK (103 aa)).

Belongs to the class-I aminoacyl-tRNA synthetase family. MetG type 1 subfamily. In terms of assembly, homodimer. It depends on Zn(2+) as a cofactor.

It is found in the cytoplasm. The catalysed reaction is tRNA(Met) + L-methionine + ATP = L-methionyl-tRNA(Met) + AMP + diphosphate. Its function is as follows. Is required not only for elongation of protein synthesis but also for the initiation of all mRNA translation through initiator tRNA(fMet) aminoacylation. The protein is Methionine--tRNA ligase of Ectopseudomonas mendocina (strain ymp) (Pseudomonas mendocina).